The chain runs to 823 residues: MKFGTFSLPRQIPTCKGGRFTRVLQSIGSVIREFSASANALQDCWKNGNESKEIDDVHTLFRYCTNLQSAKCLHARLVVSKQIQNVCISAKLVNLYCYLGNVALARHTFDHIQNRDVYAWNLMISGYGRAGNSSEVIRCFSLFMLSSGLTPDYRTFPSVLKACRTVIDGNKIHCLALKFGFMWDVYVAASLIHLYSRYKAVGNARILFDEMPVRDMGSWNAMISGYCQSGNAKEALTLSNGLRAMDSVTVVSLLSACTEAGDFNRGVTIHSYSIKHGLESELFVSNKLIDLYAEFGRLRDCQKVFDRMYVRDLISWNSIIKAYELNEQPLRAISLFQEMRLSRIQPDCLTLISLASILSQLGDIRACRSVQGFTLRKGWFLEDITIGNAVVVMYAKLGLVDSARAVFNWLPNTDVISWNTIISGYAQNGFASEAIEMYNIMEEEGEIAANQGTWVSVLPACSQAGALRQGMKLHGRLLKNGLYLDVFVVTSLADMYGKCGRLEDALSLFYQIPRVNSVPWNTLIACHGFHGHGEKAVMLFKEMLDEGVKPDHITFVTLLSACSHSGLVDEGQWCFEMMQTDYGITPSLKHYGCMVDMYGRAGQLETALKFIKSMSLQPDASIWGALLSACRVHGNVDLGKIASEHLFEVEPEHVGYHVLLSNMYASAGKWEGVDEIRSIAHGKGLRKTPGWSSMEVDNKVEVFYTGNQTHPMYEEMYRELTALQAKLKMIGYVPDHRFVLQDVEDDEKEHILMSHSERLAIAFALIATPAKTTIRIFKNLRVCGDCHSVTKFISKITEREIIVRDSNRFHHFKNGVCSCGDYW.

PPR repeat units follow at residues 85–115 (NVCISAKLVNLYCYLGNVALARHTFDHIQNR), 116–151 (DVYAWNLMISGYGRAGNSSEVIRCFSLFMLSSGLTP), 152–183 (DYRTFPSVLKACRTVIDGNKIHCLALKFGFMW), 184–214 (DVYVAASLIHLYSRYKAVGNARILFDEMPVR), 215–249 (DMGSWNAMISGYCQSGNAKEALTLSNGLRAMDSVT), 252–280 (SLLSACTEAGDFNRGVTIHSYSIKHGLES), 281–311 (ELFVSNKLIDLYAEFGRLRDCQKVFDRMYVR), 312–346 (DLISWNSIIKAYELNEQPLRAISLFQEMRLSRIQP), 347–381 (DCLTLISLASILSQLGDIRACRSVQGFTLRKGWFL), 383–413 (DITIGNAVVVMYAKLGLVDSARAVFNWLPNT), 414–448 (DVISWNTIISGYAQNGFASEAIEMYNIMEEEGEIA), 450–484 (NQGTWVSVLPACSQAGALRQGMKLHGRLLKNGLYL), 485–515 (DVFVVTSLADMYGKCGRLEDALSLFYQIPRV), 516–550 (NSVPWNTLIACHGFHGHGEKAVMLFKEMLDEGVKP), 551–581 (DHITFVTLLSACSHSGLVDEGQWCFEMMQTD), and 587–617 (SLKHYGCMVDMYGRAGQLETALKFIKSMSLQ). Positions 622 to 697 (IWGALLSACR…TPGWSSMEVD (76 aa)) are type E motif. Residues 698–728 (NKVEVFYTGNQTHPMYEEMYRELTALQAKLK) form a type E(+) motif region. The type DYW motif stretch occupies residues 729–823 (MIGYVPDHRF…NGVCSCGDYW (95 aa)).

The protein belongs to the PPR family. PCMP-H subfamily.

The protein is Pentatricopeptide repeat-containing protein At4g33990 (EMB2758) of Arabidopsis thaliana (Mouse-ear cress).